A 465-amino-acid chain; its full sequence is Lactaldehyde dehydrogenase (465 aa).

220 to 225 contacts NAD(+); it reads GSVEVG. Residues E240 and C274 contribute to the active site.

It belongs to the aldehyde dehydrogenase family. Homotetramer.

It carries out the reaction (S)-lactaldehyde + NAD(+) + H2O = (S)-lactate + NADH + 2 H(+). It participates in cofactor biosynthesis; coenzyme F420 biosynthesis. In terms of biological role, involved in F420 biosynthesis through the oxidation of lactaldehyde to lactate. The chain is Lactaldehyde dehydrogenase from Methanococcus maripaludis (strain C5 / ATCC BAA-1333).